A 636-amino-acid polypeptide reads, in one-letter code: ATP-dependent zinc metalloprotease FtsH 1 (636 aa).

Residues 1–18 (MKLSPPKKNLPPQKNNEP) lie on the Cytoplasmic side of the membrane. Residues 19–39 (PFPYLRLLVQVGIALFLVWIW) form a helical membrane-spanning segment. At 40-126 (QESLHKATVS…YGSVKPSLLS (87 aa)) the chain is on the periplasmic side. The helical transmembrane segment at 127–147 (QILFSWVVPILIFFLVWFALA) threads the bilayer. The Cytoplasmic segment spans residues 148–636 (RFMGGGGAGY…KEAPSYSSTL (489 aa)). 220 to 227 (GPPGTGKT) is an ATP binding site. H442 is a Zn(2+) binding site. The active site involves E443. H446 and D519 together coordinate Zn(2+).

The protein in the central section; belongs to the AAA ATPase family. In the C-terminal section; belongs to the peptidase M41 family. Homohexamer. The cofactor is Zn(2+).

The protein localises to the cell inner membrane. Its function is as follows. Acts as a processive, ATP-dependent zinc metallopeptidase for both cytoplasmic and membrane proteins. Plays a role in the quality control of integral membrane proteins. This is ATP-dependent zinc metalloprotease FtsH 1 from Methylacidiphilum infernorum (isolate V4) (Methylokorus infernorum (strain V4)).